A 180-amino-acid polypeptide reads, in one-letter code: Large ribosomal subunit protein uL5c (180 aa).

It belongs to the universal ribosomal protein uL5 family. As to quaternary structure, part of the 50S ribosomal subunit; contacts the 5S rRNA.

The protein resides in the plastid. Its subcellular location is the chloroplast. Functionally, binds 5S rRNA, forms part of the central protuberance of the 50S subunit. The sequence is that of Large ribosomal subunit protein uL5c (rpl5) from Tupiella akineta (Green alga).